The sequence spans 94 residues: MICOS complex subunit MIC12 (94 aa).

A helical transmembrane segment spans residues Tyr7–Tyr23.

Belongs to the MICOS complex subunit Mic12 family. Component of the mitochondrial contact site and cristae organizing system (MICOS) complex.

The protein localises to the mitochondrion inner membrane. Component of the MICOS complex, a large protein complex of the mitochondrial inner membrane that plays crucial roles in the maintenance of crista junctions, inner membrane architecture, and formation of contact sites to the outer membrane. The protein is MICOS complex subunit MIC12 (AIM5) of Eremothecium gossypii (strain ATCC 10895 / CBS 109.51 / FGSC 9923 / NRRL Y-1056) (Yeast).